Reading from the N-terminus, the 329-residue chain is Ketol-acid reductoisomerase (NADP(+)) (329 aa).

Positions 2 to 182 (VEIYYDDDAS…GGTRAGALRT (181 aa)) constitute a KARI N-terminal Rossmann domain. NADP(+)-binding positions include 25 to 28 (YGSQ), serine 51, and serine 53. Residue histidine 108 is part of the active site. Position 134 (glycine 134) interacts with NADP(+). The KARI C-terminal knotted domain occupies 183-328 (TFTEETETDL…AKLRPMMSWI (146 aa)). The Mg(2+) site is built by aspartate 191, glutamate 195, glutamate 227, and glutamate 231. Position 252 (serine 252) interacts with substrate.

Belongs to the ketol-acid reductoisomerase family. The cofactor is Mg(2+).

It catalyses the reaction (2R)-2,3-dihydroxy-3-methylbutanoate + NADP(+) = (2S)-2-acetolactate + NADPH + H(+). The enzyme catalyses (2R,3R)-2,3-dihydroxy-3-methylpentanoate + NADP(+) = (S)-2-ethyl-2-hydroxy-3-oxobutanoate + NADPH + H(+). The protein operates within amino-acid biosynthesis; L-isoleucine biosynthesis; L-isoleucine from 2-oxobutanoate: step 2/4. Its pathway is amino-acid biosynthesis; L-valine biosynthesis; L-valine from pyruvate: step 2/4. Functionally, involved in the biosynthesis of branched-chain amino acids (BCAA). Catalyzes an alkyl-migration followed by a ketol-acid reduction of (S)-2-acetolactate (S2AL) to yield (R)-2,3-dihydroxy-isovalerate. In the isomerase reaction, S2AL is rearranged via a Mg-dependent methyl migration to produce 3-hydroxy-3-methyl-2-ketobutyrate (HMKB). In the reductase reaction, this 2-ketoacid undergoes a metal-dependent reduction by NADPH to yield (R)-2,3-dihydroxy-isovalerate. This Frankia casuarinae (strain DSM 45818 / CECT 9043 / HFP020203 / CcI3) protein is Ketol-acid reductoisomerase (NADP(+)).